Here is an 876-residue protein sequence, read N- to C-terminus: Valine--tRNA ligase (876 aa).

The 'HIGH' region signature appears at 44 to 54; it reads PNVTGKLHLGH. Residues 520 to 524 carry the 'KMSKS' region motif; sequence KMSKS. Lys523 contributes to the ATP binding site. A coiled-coil region spans residues 805–876; that stretch reads LEGLIDMDKE…VKNRIEQLKA (72 aa).

Belongs to the class-I aminoacyl-tRNA synthetase family. ValS type 1 subfamily. In terms of assembly, monomer.

It localises to the cytoplasm. The enzyme catalyses tRNA(Val) + L-valine + ATP = L-valyl-tRNA(Val) + AMP + diphosphate. In terms of biological role, catalyzes the attachment of valine to tRNA(Val). As ValRS can inadvertently accommodate and process structurally similar amino acids such as threonine, to avoid such errors, it has a 'posttransfer' editing activity that hydrolyzes mischarged Thr-tRNA(Val) in a tRNA-dependent manner. This chain is Valine--tRNA ligase, found in Staphylococcus haemolyticus (strain JCSC1435).